Here is a 329-residue protein sequence, read N- to C-terminus: Phenylalanine--tRNA ligase alpha subunit (329 aa).

Glutamate 254 serves as a coordination point for Mg(2+).

Belongs to the class-II aminoacyl-tRNA synthetase family. Phe-tRNA synthetase alpha subunit type 1 subfamily. Tetramer of two alpha and two beta subunits. Mg(2+) serves as cofactor.

It localises to the cytoplasm. The catalysed reaction is tRNA(Phe) + L-phenylalanine + ATP = L-phenylalanyl-tRNA(Phe) + AMP + diphosphate + H(+). The chain is Phenylalanine--tRNA ligase alpha subunit from Histophilus somni (strain 129Pt) (Haemophilus somnus).